We begin with the raw amino-acid sequence, 804 residues long: DNA gyrase subunit A (804 aa).

The 465-residue stretch at 31 to 495 (IPDVRDGLKP…QSIEYNEEEL (465 aa)) folds into the Topo IIA-type catalytic domain. Y119 (O-(5'-phospho-DNA)-tyrosine intermediate) is an active-site residue. A GyrA-box motif is present at residues 522–528 (QKRGGKG).

It belongs to the type II topoisomerase GyrA/ParC subunit family. Heterotetramer, composed of two GyrA and two GyrB chains. In the heterotetramer, GyrA contains the active site tyrosine that forms a transient covalent intermediate with DNA, while GyrB binds cofactors and catalyzes ATP hydrolysis.

It is found in the cytoplasm. It carries out the reaction ATP-dependent breakage, passage and rejoining of double-stranded DNA.. A type II topoisomerase that negatively supercoils closed circular double-stranded (ds) DNA in an ATP-dependent manner to modulate DNA topology and maintain chromosomes in an underwound state. Negative supercoiling favors strand separation, and DNA replication, transcription, recombination and repair, all of which involve strand separation. Also able to catalyze the interconversion of other topological isomers of dsDNA rings, including catenanes and knotted rings. Type II topoisomerases break and join 2 DNA strands simultaneously in an ATP-dependent manner. The polypeptide is DNA gyrase subunit A (Thermotoga maritima (strain ATCC 43589 / DSM 3109 / JCM 10099 / NBRC 100826 / MSB8)).